The sequence spans 234 residues: uncharacterized protein (234 aa).

An NADP(+)-binding site is contributed by 10-34 (VVTGASSGIGASIAETLANQGVKVV). Position 143 (Ser-143) interacts with substrate. Residue Tyr-156 is the Proton acceptor of the active site.

It belongs to the short-chain dehydrogenases/reductases (SDR) family.

This is an uncharacterized protein from Staphylococcus saprophyticus subsp. saprophyticus (strain ATCC 15305 / DSM 20229 / NCIMB 8711 / NCTC 7292 / S-41).